Reading from the N-terminus, the 1175-residue chain is Solute carrier family 9 member C1 (1175 aa).

Residues 1–39 (MEMEEISENLTASHSIKLTNMWLELLKSVFLSTPQDLPE) are Extracellular-facing. A helical membrane pass occupies residues 40–59 (IILILSLICTVGAFLNMHLK). Over 60–64 (DFPIP) the chain is Cytoplasmic. Residues 65-82 (LPVILFLIGCCFEILSFA) form a helical membrane-spanning segment. Topologically, residues 83 to 98 (STQIQIYADAIQWMDP) are extracellular. The chain crosses the membrane as a helical span at residues 99 to 115 (DIFFGIFTPVIIFNVAF). Residues 116 to 125 (DMDIYMLQKL) lie on the Cytoplasmic side of the membrane. Residues 126-151 (FWQILVITIPGFLINYTLILWYLQSV) form a helical membrane-spanning segment. Positions 126-213 (FWQILVITIP…SLVIYSGVVH (88 aa)) are transport core domain. Residues 152 to 157 (NKLSLK) are Extracellular-facing. Residues 158-183 (TVPWLLFSAVLISSDPMLTSASIRDL) form a helical membrane-spanning segment. The Cytoplasmic portion of the chain corresponds to 184–186 (GLS). A helical transmembrane segment spans residues 187-212 (RSLTNLINGESLLTSVLSLVIYSGVV). Residues 213–225 (HIRFKSKSVNHTL) are Extracellular-facing. Residues 226-257 (AHKVMSTAWSYIVESFITGIVFTKVIQLWMAT) form a helical membrane-spanning segment. The Cytoplasmic segment spans residues 258–261 (IFGD). A helical transmembrane segment spans residues 262 to 283 (DVNHITLIFSVLYLIFYVCELV). Residues 284-286 (GMS) are Extracellular-facing. The helical transmembrane segment at 287-300 (GIFTLATIGLFLNS) threads the bilayer. Over 301–307 (TSFKPGV) the chain is Cytoplasmic. Residues 308–339 (EAFLLEFWNCLSFIGFLMVFTFIGLLIPAHTY) traverse the membrane as a helical segment. Residues 340–344 (LHISF) are Extracellular-facing. Residues 345–374 (SDVYYSLNIYFTLIVLRLLVFLLMSPILSR) form a helical membrane-spanning segment. The interval 345–446 (SDVYYSLNIY…FILPMAVTKL (102 aa)) is transport core domain. Topologically, residues 375–380 (LGHGFS) are cytoplasmic. Residues 381–411 (WRWAFIMVWSEMKGTPNINMALLLAYSDISL) form a helical membrane-spanning segment. The Extracellular segment spans residues 412–415 (GSER). Residues 416–446 (ERSQILFHGVSVCVITLIVNRFILPMAVTKL) traverse the membrane as a helical segment. At 447–632 (GLRDVTSTKY…ACHRIVFTNE (186 aa)) the chain is on the cytoplasmic side. The ion transport-like stretch occupies residues 618-698 (YMFLHACHRI…EFFSHTWLLF (81 aa)). Residues 633-653 (FEYTGYLVVLMSTYPMIICWI) traverse the membrane as a helical segment. Residues 654–657 (SRLK) lie on the Extracellular side of the membrane. A helical membrane pass occupies residues 658–684 (DIYDNEIKCANYYFLAFYILEALLKVA). Over 685–691 (AMRKEFF) the chain is Cytoplasmic. A helical transmembrane segment spans residues 692–716 (SHTWLLFELGITLVGVLDIILIETD). Over 717–724 (SISYNFDL) the chain is Extracellular. The helical transmembrane segment at 725 to 751 (TETVVFMNVIRLLRILRILKLVTPKLL) threads the bilayer. The Cytoplasmic segment spans residues 752 to 1175 (QIIDKRMSQQ…EELIEENINI (424 aa)). Residues 1137–1146 (MKPDSERESF) are compositionally biased toward basic and acidic residues. The segment at 1137–1175 (MKPDSERESFETLDETSEEDNGKKENQENEELIEENINI) is disordered. Positions 1164–1175 (ENEELIEENINI) are enriched in acidic residues.

The protein belongs to the monovalent cation:proton antiporter 1 (CPA1) transporter (TC 2.A.36) family. As to quaternary structure, interacts with soluble adenylyl cyclase (sAC). As to expression, testis-specific. Specifically present in the principal piece of sperm tail (at protein level).

The protein resides in the cell projection. Its subcellular location is the cilium. The protein localises to the flagellum membrane. Functionally, sperm-specific solute carrier involved in intracellular pH regulation of spermatozoa. Required for sperm motility and fertility. Involved in sperm cell hyperactivation, a step needed for sperm motility which is essential late in the preparation of sperm for fertilization. Required for the expression and bicarbonate regulation of the soluble adenylyl cyclase (sAC). In Mus musculus (Mouse), this protein is Solute carrier family 9 member C1 (Slc9c1).